Reading from the N-terminus, the 864-residue chain is Leucine--tRNA ligase (864 aa).

Residues 42-52 (PYPSGKLHMGH) carry the 'HIGH' region motif. The 'KMSKS' region signature appears at 624-628 (KMSKS). ATP is bound at residue lysine 627.

This sequence belongs to the class-I aminoacyl-tRNA synthetase family.

Its subcellular location is the cytoplasm. The enzyme catalyses tRNA(Leu) + L-leucine + ATP = L-leucyl-tRNA(Leu) + AMP + diphosphate. The chain is Leucine--tRNA ligase from Burkholderia ambifaria (strain ATCC BAA-244 / DSM 16087 / CCUG 44356 / LMG 19182 / AMMD) (Burkholderia cepacia (strain AMMD)).